Here is a 238-residue protein sequence, read N- to C-terminus: MAVEGGMKCVKFLLYVLLLAFCACAVGLIAVGVGAQLVLRQTIVQGATPGSLLPVVIIAVGAFLFLVAFVGCCGACKENYCLMVTFAIFLSLIMLVEVAVAIAGYVFRDKVMSEFNKDFRQQMQNYPKNNHTVSIVDRMQEDFKCCGAANYTDWGSIPLMSKARVPDSCCVNVTQGCGISFKVKEIHEEGCVEKIGGWLRSNVLVVAAAALGIAFVEVLGIIFACCLVKSIRSGYEVM.

At 1 to 11 (MAVEGGMKCVK) the chain is on the cytoplasmic side. The helical transmembrane segment at 12–32 (FLLYVLLLAFCACAVGLIAVG) threads the bilayer. Over 33-51 (VGAQLVLRQTIVQGATPGS) the chain is Extracellular. A helical transmembrane segment spans residues 52–72 (LLPVVIIAVGAFLFLVAFVGC). Over 73–81 (CGACKENYC) the chain is Cytoplasmic. Residues 82–102 (LMVTFAIFLSLIMLVEVAVAI) traverse the membrane as a helical segment. The Extracellular portion of the chain corresponds to 103 to 202 (AGYVFRDKVM…EKIGGWLRSN (100 aa)). Residues asparagine 130, asparagine 150, and asparagine 172 are each glycosylated (N-linked (GlcNAc...) asparagine). The chain crosses the membrane as a helical span at residues 203 to 223 (VLVVAAAALGIAFVEVLGIIF). The Cytoplasmic portion of the chain corresponds to 224–238 (ACCLVKSIRSGYEVM). The short motif at 234–238 (GYEVM) is the Lysosomal targeting motif element.

It belongs to the tetraspanin (TM4SF) family. In terms of assembly, interacts with TIMP1 and ITGB1 and recruits TIMP1 to ITGB1. Interacts with CD9. Identified in a complex with CD9 and ITGB3. Interacts with PMEL. Interacts with KDR/VEGFR2; identified in a complex with ITGB1 and KDR/VEGFR2 and is required to recruit KDR to ITGB1 complexes. Interacts with SYT7. Post-translationally, palmitoylated at a low, basal level in unstimulated platelets. The level of palmitoylation increases when platelets are activated by thrombin (in vitro).

The protein localises to the cell membrane. It localises to the lysosome membrane. It is found in the late endosome membrane. Its subcellular location is the endosome. The protein resides in the multivesicular body. The protein localises to the melanosome. It localises to the secreted. It is found in the extracellular exosome. Its subcellular location is the cell surface. Its function is as follows. Functions as a cell surface receptor for TIMP1 and plays a role in the activation of cellular signaling cascades. Plays a role in the activation of ITGB1 and integrin signaling, leading to the activation of AKT, FAK/PTK2 and MAP kinases. Promotes cell survival, reorganization of the actin cytoskeleton, cell adhesion, spreading and migration, via its role in the activation of AKT and FAK/PTK2. Plays a role in VEGFA signaling via its role in regulating the internalization of KDR/VEGFR2. Plays a role in intracellular vesicular transport processes, and is required for normal trafficking of the PMEL luminal domain that is essential for the development and maturation of melanocytes. Plays a role in the adhesion of leukocytes onto endothelial cells via its role in the regulation of SELP trafficking. May play a role in mast cell degranulation in response to Ms4a2/FceRI stimulation, but not in mast cell degranulation in response to other stimuli. This Felis catus (Cat) protein is CD63 antigen (CD63).